The primary structure comprises 35 residues: uncharacterized protein (35 aa).

This is an uncharacterized protein from Haloarcula hispanica (His1V).